Here is a 265-residue protein sequence, read N- to C-terminus: DNA repair protein RecO (265 aa).

This sequence belongs to the RecO family.

Functionally, involved in DNA repair and RecF pathway recombination. The sequence is that of DNA repair protein RecO from Mycolicibacterium paratuberculosis (strain ATCC BAA-968 / K-10) (Mycobacterium paratuberculosis).